A 346-amino-acid polypeptide reads, in one-letter code: UPF0718 protein YraQ (346 aa).

The next 9 membrane-spanning stretches (helical) occupy residues 12–32 (PIQWWKPALFFLVVIAGLWYV), 71–91 (MIYFLAVWKAAVLGVILGSLI), 113–133 (LLGTLFSLPGMMCTCCAAPVA), 146–166 (ALAFWMGNPVLNPATLVFMGF), 167–187 (VLGWGFAAIRLVAGLVMVLLI), 223–243 (ALWTLFWSTIPVYILAVLVLG), 260–280 (SLMWVVAMAVAGCLFVIPTAA), 296–316 (APALALLMTLPAVSLPSLIML), and 326–346 (WLTGAMVAVSGVIVGGLALLF).

The protein belongs to the UPF0718 family.

It localises to the cell membrane. The polypeptide is UPF0718 protein YraQ (yraQ) (Escherichia coli (strain K12)).